Consider the following 464-residue polypeptide: MISIAFKHYGFYSPSSNEILETIQMVRMEHLDIRTVTMGISLRDCSHPDPEVFNENIYEKITSRAKELIRTTNEIQSLYGIPIINRRISVTPISIAAESCRSQDFVSVAKTMDEAAKEAGVDFIGGFSALVHKGETRGDLKLINSIPEALASTEKVCSSVNVATTKAGINMDAVGLMGKVIKKTAELTAERDGIGCAKLVVFANAPEDNPFMAGAFHGIGEPECVINVGVSGPGAVNTAVCELENPNLTEISETIKKTAFKITRMGEMVGKEVSRRLGVEFGILDLSLAPTPAIGDSVAAILEAMGLERCGTHGTTAALALLNDAVKKGGAMASSSVGGLSGAFIPVSEDAGMIEAVKAGSLTLEKLEAMTSVCSVGLDMIAVPGDTSAATLSAIIADEMAVGVINKKTTAVRIIPAPGKAVGDSVEFGGLLGSAPIMPVSSFSSETFVNRGGRIPAPIQSLTN.

The protein belongs to the UPF0210 family.

The sequence is that of UPF0210 protein MA_1691 from Methanosarcina acetivorans (strain ATCC 35395 / DSM 2834 / JCM 12185 / C2A).